The primary structure comprises 241 residues: Polycomb group RING finger protein 3 (241 aa).

Residues 17 to 56 form an RING-type zinc finger; the sequence is CRLCSGYLIDATTVTECLHTFCRSCLVKYLEENNTCPTCR. The segment at 115 to 148 is disordered; it reads AKQHLDPRNGETKADDNSNKETAEEKQEEDNDYH. Residues 117–139 show a composition bias toward basic and acidic residues; it reads QHLDPRNGETKADDNSNKETAEE. The tract at residues 131–241 is interaction with BCORL1; the sequence is NSNKETAEEK…LHYRPKMDLL (111 aa).

Component of a PRC1-like complex that contains PCGF3, RNF2 and RYBP. Interacts with RNF2. Interacts with CBX6, CBX7 and CBX8. Interacts with BCORL1.

It localises to the nucleus. The protein resides in the nucleoplasm. Its function is as follows. Component of a Polycomb group (PcG) multiprotein PRC1-like complex, a complex class required to maintain the transcriptionally repressive state of many genes, including Hox genes, throughout development. PcG PRC1 complex acts via chromatin remodeling and modification of histones; it mediates monoubiquitination of histone H2A 'Lys-119', rendering chromatin heritably changed in its expressibility. Within the PRC1-like complex, regulates RNF2 ubiquitin ligase activity. Plays a redundant role with PCGF5 as part of a PRC1-like complex that mediates monoubiquitination of histone H2A 'Lys-119' on the X chromosome and is required for normal silencing of one copy of the X chromosome in XX females. The sequence is that of Polycomb group RING finger protein 3 (PcgF3) from Mus musculus (Mouse).